The chain runs to 403 residues: Aminomethyltransferase, mitochondrial (403 aa).

The transit peptide at 1-28 (MHRIVSVVAPLGFRLQAQPLVQSRPLSS) directs the protein to the mitochondrion. Substrate contacts are provided by glutamate 232 and arginine 261. Lysine 368 carries the N6-succinyllysine modification. Substrate is bound at residue tyrosine 399.

It belongs to the GcvT family. As to quaternary structure, the glycine cleavage system is composed of four proteins: P, T, L and H.

The protein localises to the mitochondrion. It catalyses the reaction N(6)-[(R)-S(8)-aminomethyldihydrolipoyl]-L-lysyl-[protein] + (6S)-5,6,7,8-tetrahydrofolate = N(6)-[(R)-dihydrolipoyl]-L-lysyl-[protein] + (6R)-5,10-methylene-5,6,7,8-tetrahydrofolate + NH4(+). Functionally, the glycine cleavage system catalyzes the degradation of glycine. The sequence is that of Aminomethyltransferase, mitochondrial from Mus musculus (Mouse).